The primary structure comprises 53 residues: Cytochrome c oxidase subunit 7e (53 aa).

Slime mold cytochrome c oxidase consists of at least seven different polypeptides species, subunits I, II, III, IV, V, VI, and VIIe/s in order of MW.

The protein resides in the mitochondrion inner membrane. The enzyme catalyses 4 Fe(II)-[cytochrome c] + O2 + 8 H(+)(in) = 4 Fe(III)-[cytochrome c] + 2 H2O + 4 H(+)(out). Its function is as follows. This protein is one of the nuclear-coded polypeptide chains of cytochrome c oxidase, the terminal oxidase in mitochondrial electron transport. This chain is Cytochrome c oxidase subunit 7e (cxgE), found in Dictyostelium discoideum (Social amoeba).